The chain runs to 476 residues: Bifunctional protein HldE (476 aa).

The segment at 1-319 (MKVSLPAFEK…EALALHHGES (319 aa)) is ribokinase. Residue 195 to 198 (NMSE) participates in ATP binding. The active site involves D264. A cytidylyltransferase region spans residues 345-476 (MTNGCFDILH…AIIQNIMANQ (132 aa)).

In the N-terminal section; belongs to the carbohydrate kinase PfkB family. It in the C-terminal section; belongs to the cytidylyltransferase family. Homodimer.

The catalysed reaction is D-glycero-beta-D-manno-heptose 7-phosphate + ATP = D-glycero-beta-D-manno-heptose 1,7-bisphosphate + ADP + H(+). It carries out the reaction D-glycero-beta-D-manno-heptose 1-phosphate + ATP + H(+) = ADP-D-glycero-beta-D-manno-heptose + diphosphate. It functions in the pathway nucleotide-sugar biosynthesis; ADP-L-glycero-beta-D-manno-heptose biosynthesis; ADP-L-glycero-beta-D-manno-heptose from D-glycero-beta-D-manno-heptose 7-phosphate: step 1/4. The protein operates within nucleotide-sugar biosynthesis; ADP-L-glycero-beta-D-manno-heptose biosynthesis; ADP-L-glycero-beta-D-manno-heptose from D-glycero-beta-D-manno-heptose 7-phosphate: step 3/4. Its function is as follows. Catalyzes the phosphorylation of D-glycero-D-manno-heptose 7-phosphate at the C-1 position to selectively form D-glycero-beta-D-manno-heptose-1,7-bisphosphate. Functionally, catalyzes the ADP transfer from ATP to D-glycero-beta-D-manno-heptose 1-phosphate, yielding ADP-D-glycero-beta-D-manno-heptose. The chain is Bifunctional protein HldE from Shewanella putrefaciens (strain CN-32 / ATCC BAA-453).